Consider the following 209-residue polypeptide: Large ribosomal subunit protein bL25 (209 aa).

The protein belongs to the bacterial ribosomal protein bL25 family. CTC subfamily. In terms of assembly, part of the 50S ribosomal subunit; part of the 5S rRNA/L5/L18/L25 subcomplex. Contacts the 5S rRNA. Binds to the 5S rRNA independently of L5 and L18.

This is one of the proteins that binds to the 5S RNA in the ribosome where it forms part of the central protuberance. The protein is Large ribosomal subunit protein bL25 of Xanthomonas campestris pv. campestris (strain 8004).